A 98-amino-acid polypeptide reads, in one-letter code: Gas vesicle protein J2 (98 aa).

The tract at residues 75-98 (AGVDADDSKSVLERPDPPTTEGSE) is disordered. Positions 80 to 90 (DDSKSVLERPD) are enriched in basic and acidic residues.

Belongs to the gas vesicle GvpA family. In terms of assembly, gvpF to GvpM interact with each other in vitro, and may form multi-subunit complex(es). Interacts with GvpA.

It is found in the gas vesicle. Its function is as follows. A minor component of the gas vesicle. Proteins GvpF to GvpM might be involved in nucleating gas vesicle formation. Gas vesicles are hollow, gas filled proteinaceous nanostructures found in several microbial planktonic microorganisms. They allow positioning of halobacteria at the optimal depth for growth in the poorly aerated, shallow brine pools of their habitat. Expression of 2 c-vac DNA fragments containing 2 divergently transcribed regions (gvpE-gvpF-gvpG-gvpH-gvpI-gvpJ-gvpK-gvpL-gvpM and gvpA-gvpC-gvpN-gvpO) allows H.volcanii to produce gas vesicles. The polypeptide is Gas vesicle protein J2 (Halobacterium salinarum (strain ATCC 700922 / JCM 11081 / NRC-1) (Halobacterium halobium)).